The primary structure comprises 430 residues: Glutamate-1-semialdehyde 2,1-aminomutase (430 aa).

Lys265 is subject to N6-(pyridoxal phosphate)lysine.

This sequence belongs to the class-III pyridoxal-phosphate-dependent aminotransferase family. HemL subfamily. The cofactor is pyridoxal 5'-phosphate.

It localises to the cytoplasm. The enzyme catalyses (S)-4-amino-5-oxopentanoate = 5-aminolevulinate. The protein operates within porphyrin-containing compound metabolism; protoporphyrin-IX biosynthesis; 5-aminolevulinate from L-glutamyl-tRNA(Glu): step 2/2. The chain is Glutamate-1-semialdehyde 2,1-aminomutase from Caldivirga maquilingensis (strain ATCC 700844 / DSM 13496 / JCM 10307 / IC-167).